Reading from the N-terminus, the 180-residue chain is Ribulose bisphosphate carboxylase small subunit, chloroplastic 3 (180 aa).

The transit peptide at 1–56 (MASSVMSSAAVATRGNGAQASMVAPFTGLKSTASFPVSRKQNLDITSIASNGGRVS) directs the protein to the chloroplast.

Belongs to the RuBisCO small chain family. Heterohexadecamer of 8 large and 8 small subunits. As to quaternary structure, (Microbial infection) Binds to tobamovirus movement protein; this interaction seems required for viral systemic movement.

The protein localises to the plastid. It is found in the chloroplast. The protein resides in the cell junction. It localises to the plasmodesma. In terms of biological role, ruBisCO catalyzes two reactions: the carboxylation of D-ribulose 1,5-bisphosphate, the primary event in carbon dioxide fixation, as well as the oxidative fragmentation of the pentose substrate. Both reactions occur simultaneously and in competition at the same active site. Although the small subunit is not catalytic it is essential for maximal activity. Involved in antiviral defenses. This is Ribulose bisphosphate carboxylase small subunit, chloroplastic 3 from Solanum lycopersicum (Tomato).